The sequence spans 394 residues: 3-phenylpropionate/cinnamic acid dioxygenase ferredoxin--NAD(+) reductase component (394 aa).

Threonine 5 to lysine 36 contacts FAD. Arginine 146–glutamate 174 is an NAD(+) binding site.

The protein belongs to the bacterial ring-hydroxylating dioxygenase ferredoxin reductase family. This dioxygenase system consists of four proteins: the two subunits of the hydroxylase component (HcaE and HcaF), a ferredoxin (HcaC) and a ferredoxin reductase (HcaD). Requires FAD as cofactor.

It carries out the reaction 2 reduced [2Fe-2S]-[ferredoxin] + NAD(+) + H(+) = 2 oxidized [2Fe-2S]-[ferredoxin] + NADH. It functions in the pathway aromatic compound metabolism; 3-phenylpropanoate degradation. Functionally, part of the multicomponent 3-phenylpropionate dioxygenase, that converts 3-phenylpropionic acid (PP) and cinnamic acid (CI) into 3-phenylpropionate-dihydrodiol (PP-dihydrodiol) and cinnamic acid-dihydrodiol (CI-dihydrodiol), respectively. In Photorhabdus laumondii subsp. laumondii (strain DSM 15139 / CIP 105565 / TT01) (Photorhabdus luminescens subsp. laumondii), this protein is 3-phenylpropionate/cinnamic acid dioxygenase ferredoxin--NAD(+) reductase component.